A 264-amino-acid chain; its full sequence is 3-methyl-2-oxobutanoate hydroxymethyltransferase (264 aa).

Mg(2+)-binding residues include aspartate 45 and aspartate 84. 3-methyl-2-oxobutanoate-binding positions include 45–46 (DS), aspartate 84, and lysine 112. Glutamate 114 lines the Mg(2+) pocket. The Proton acceptor role is filled by glutamate 181.

The protein belongs to the PanB family. In terms of assembly, homodecamer; pentamer of dimers. It depends on Mg(2+) as a cofactor.

The protein resides in the cytoplasm. It carries out the reaction 3-methyl-2-oxobutanoate + (6R)-5,10-methylene-5,6,7,8-tetrahydrofolate + H2O = 2-dehydropantoate + (6S)-5,6,7,8-tetrahydrofolate. The protein operates within cofactor biosynthesis; (R)-pantothenate biosynthesis; (R)-pantoate from 3-methyl-2-oxobutanoate: step 1/2. Its function is as follows. Catalyzes the reversible reaction in which hydroxymethyl group from 5,10-methylenetetrahydrofolate is transferred onto alpha-ketoisovalerate to form ketopantoate. The sequence is that of 3-methyl-2-oxobutanoate hydroxymethyltransferase from Shigella boydii serotype 18 (strain CDC 3083-94 / BS512).